Consider the following 743-residue polypeptide: Amylovoran biosynthesis protein AmsF (743 aa).

The first 27 residues, 1 to 27 (MKRRELIRTAFSTIVATAALSSVSARA), serve as a signal peptide directing secretion.

To R.meliloti ExoP.

Its subcellular location is the periplasm. It participates in glycan metabolism; exopolysaccharide biosynthesis. Its function is as follows. Involved in the biosynthesis of amylovoran which functions as a virulence factor. May be involved in the polymerization or late modification of the repeating units. The sequence is that of Amylovoran biosynthesis protein AmsF (amsF) from Erwinia amylovora (Fire blight bacteria).